We begin with the raw amino-acid sequence, 514 residues long: MRSIKRRKKMANDKTLFDWVEDRKSTLEEMEQTDFFALPEFVERNLKYPFFEWQKSALENFLIFDRTSKLKDFPDIKNRPTHLLFNMATGAGKTMMMAALILYYFEKGYRHFLFFVNQNNIVDKTENNFTDPTHAKFLFTEKILQGDTVIPIRKVETFSPHSDGIEIKFTSIQKLYNDIHTEQENQTTLTDLHDLNLVMLGDEAHHLNAQTKGKKQGELDLEKEMNDRTSKAEIERKGWEHMVLELLLNKNGNPSENVLLEFTATLPENAEVQQKYADKIITKFGLKEFLQKGYTKEINLVSSTLGKKERVLHALLFAWYRHQIALKYGIANFKPVMLFRSKTIDESKADYLAFLNWVENVQAVDFSFLTTFLASLNDSDNANEQGKTRTEQALKFIQDNKFEFVHLADWVKQNYQKHNVIITNSETNKSKTEKTDSETEKLLNNLEAADNPIRAIFTVDRLTEGWDVLNLFDIVRLYEGQNGGGSNKKSGKSCRHRIRKAVNWSWRALFSICV.

It belongs to the type III restriction-modification system Res protein family. In terms of assembly, contains two different subunits: Res and Mod. Mg(2+) serves as cofactor. It depends on S-adenosyl-L-methionine as a cofactor.

The catalysed reaction is Endonucleolytic cleavage of DNA to give specific double-stranded fragments with terminal 5'-phosphates.. Functionally, a type III restriction enzyme that recognizes 2 inversely oriented double-stranded sequences 5'-CGAAT-3' and cleaves 25-27 base pairs downstream. After binding to one recognition site undergoes random one-dimensional diffusion along DNA until it collides with a stationary enzyme bound to the second DNA site, which is when DNA cleavage occurs. DNA restriction requires both the Res and Mod subunits. This is Probable type III restriction-modification enzyme HindVIP Res subunit from Haemophilus influenzae (strain ATCC 51907 / DSM 11121 / KW20 / Rd).